Consider the following 197-residue polypeptide: Segregation and condensation protein B (197 aa).

The protein belongs to the ScpB family. In terms of assembly, homodimer. Homodimerization may be required to stabilize the binding of ScpA to the Smc head domains. Component of a cohesin-like complex composed of ScpA, ScpB and the Smc homodimer, in which ScpA and ScpB bind to the head domain of Smc. The presence of the three proteins is required for the association of the complex with DNA.

Its subcellular location is the cytoplasm. Functionally, participates in chromosomal partition during cell division. May act via the formation of a condensin-like complex containing Smc and ScpA that pull DNA away from mid-cell into both cell halves. This chain is Segregation and condensation protein B, found in Bacillus licheniformis (strain ATCC 14580 / DSM 13 / JCM 2505 / CCUG 7422 / NBRC 12200 / NCIMB 9375 / NCTC 10341 / NRRL NRS-1264 / Gibson 46).